The primary structure comprises 506 residues: Cysteine--tRNA ligase (506 aa).

Cysteine 43 contributes to the Zn(2+) binding site. The 'HIGH' region motif lies at 45–55; the sequence is VTVYDLCHLGH. 3 residues coordinate Zn(2+): cysteine 237, histidine 262, and glutamate 266. The short motif at 294–298 is the 'KMSKS' region element; sequence KMSKS. Lysine 297 serves as a coordination point for ATP.

The protein belongs to the class-I aminoacyl-tRNA synthetase family. Monomer. Zn(2+) serves as cofactor.

It is found in the cytoplasm. The enzyme catalyses tRNA(Cys) + L-cysteine + ATP = L-cysteinyl-tRNA(Cys) + AMP + diphosphate. This chain is Cysteine--tRNA ligase, found in Synechococcus sp. (strain JA-3-3Ab) (Cyanobacteria bacterium Yellowstone A-Prime).